Here is a 593-residue protein sequence, read N- to C-terminus: NADH-quinone oxidoreductase subunit C/D (593 aa).

The segment at 1-184 (MTADTAVSIP…DPFSLTLAKQ (184 aa)) is NADH dehydrogenase I subunit C. Residues 208 to 593 (DYMFLNLGPN…IDFVMADVDR (386 aa)) form an NADH dehydrogenase I subunit D region.

The protein in the N-terminal section; belongs to the complex I 30 kDa subunit family. In the C-terminal section; belongs to the complex I 49 kDa subunit family. NDH-1 is composed of 13 different subunits. Subunits NuoB, CD, E, F, and G constitute the peripheral sector of the complex.

The protein localises to the cell inner membrane. It catalyses the reaction a quinone + NADH + 5 H(+)(in) = a quinol + NAD(+) + 4 H(+)(out). Its function is as follows. NDH-1 shuttles electrons from NADH, via FMN and iron-sulfur (Fe-S) centers, to quinones in the respiratory chain. The immediate electron acceptor for the enzyme in this species is believed to be ubiquinone. Couples the redox reaction to proton translocation (for every two electrons transferred, four hydrogen ions are translocated across the cytoplasmic membrane), and thus conserves the redox energy in a proton gradient. The polypeptide is NADH-quinone oxidoreductase subunit C/D (Ectopseudomonas mendocina (strain ymp) (Pseudomonas mendocina)).